Here is a 171-residue protein sequence, read N- to C-terminus: Large ribosomal subunit protein uL10 (171 aa).

It belongs to the universal ribosomal protein uL10 family. In terms of assembly, part of the ribosomal stalk of the 50S ribosomal subunit. The N-terminus interacts with L11 and the large rRNA to form the base of the stalk. The C-terminus forms an elongated spine to which L12 dimers bind in a sequential fashion forming a multimeric L10(L12)X complex.

Functionally, forms part of the ribosomal stalk, playing a central role in the interaction of the ribosome with GTP-bound translation factors. This chain is Large ribosomal subunit protein uL10, found in Paracoccus denitrificans (strain Pd 1222).